A 222-amino-acid polypeptide reads, in one-letter code: Latexin (222 aa).

The 97-residue stretch at 1 to 97 (MEIPPTNYPA…NFTFEGETGK (97 aa)) folds into the Cystatin LXN-type 1 domain. Lys55 is modified (N6-acetyllysine). Residues 98 to 117 (NPDEEDNTFYQRLKSMKEPL) are alpha-helical linker. In terms of domain architecture, Cystatin LXN-type 2 spans 118–222 (EAQNIPDNFG…SRLPKEVQLE (105 aa)).

Belongs to the protease inhibitor I47 (latexin) family. Highly expressed in heart, prostate, ovary, kidney, pancreas, and colon, moderate or low in other tissues including brain.

The protein localises to the cytoplasm. Its function is as follows. Hardly reversible, non-competitive, and potent inhibitor of CPA1, CPA2 and CPA4. May play a role in inflammation. The chain is Latexin (LXN) from Homo sapiens (Human).